Here is a 272-residue protein sequence, read N- to C-terminus: ATP synthase subunit delta (272 aa).

It belongs to the ATPase delta chain family. As to quaternary structure, F-type ATPases have 2 components, F(1) - the catalytic core - and F(0) - the membrane proton channel. F(1) has five subunits: alpha(3), beta(3), gamma(1), delta(1), epsilon(1). F(0) has three main subunits: a(1), b(2) and c(10-14). The alpha and beta chains form an alternating ring which encloses part of the gamma chain. F(1) is attached to F(0) by a central stalk formed by the gamma and epsilon chains, while a peripheral stalk is formed by the delta and b chains.

It is found in the cell membrane. F(1)F(0) ATP synthase produces ATP from ADP in the presence of a proton or sodium gradient. F-type ATPases consist of two structural domains, F(1) containing the extramembraneous catalytic core and F(0) containing the membrane proton channel, linked together by a central stalk and a peripheral stalk. During catalysis, ATP synthesis in the catalytic domain of F(1) is coupled via a rotary mechanism of the central stalk subunits to proton translocation. Its function is as follows. This protein is part of the stalk that links CF(0) to CF(1). It either transmits conformational changes from CF(0) to CF(1) or is implicated in proton conduction. The polypeptide is ATP synthase subunit delta (Corynebacterium urealyticum (strain ATCC 43042 / DSM 7109)).